The primary structure comprises 562 residues: NAD-dependent malic enzyme (562 aa).

The active-site Proton donor is the Tyr-101. Arg-154 is an NAD(+) binding site. The active-site Proton acceptor is the Lys-172. Residues Glu-243, Asp-244, and Asp-267 each coordinate a divalent metal cation. Asp-267 and Asn-415 together coordinate NAD(+).

The protein belongs to the malic enzymes family. As to quaternary structure, homotetramer. Mg(2+) serves as cofactor. The cofactor is Mn(2+).

The enzyme catalyses (S)-malate + NAD(+) = pyruvate + CO2 + NADH. The catalysed reaction is oxaloacetate + H(+) = pyruvate + CO2. The polypeptide is NAD-dependent malic enzyme (Shewanella sediminis (strain HAW-EB3)).